A 97-amino-acid chain; its full sequence is MKRSGCWHQRMLLSLVLLTWTHVTFSALIRSHNFSRWPKPPCKMYYPIDPDYEANCPDVKAYVCATNGLTYKNECFFCIDRWEFGPHIQFVKYGKCE.

A signal peptide spans 1–26; it reads MKRSGCWHQRMLLSLVLLTWTHVTFS. An N-linked (GlcNAc...) asparagine glycan is attached at Asn-33. In terms of domain architecture, Kazal-like spans 36–97; that stretch reads RWPKPPCKMY…IQFVKYGKCE (62 aa). 3 disulfides stabilise this stretch: Cys-42–Cys-78, Cys-56–Cys-75, and Cys-64–Cys-96.

The protein localises to the secreted. In terms of biological role, may be a serine protease inhibitor. Essential for sperm maturation and fertility. Inhibits sperm acrosome reaction, protecting sperm from premature reaction. The polypeptide is Serine protease inhibitor Kazal-type 13 (Spink13) (Mus musculus (Mouse)).